The primary structure comprises 253 residues: Sulfate transporter CysZ (253 aa).

4 helical membrane-spanning segments follow: residues 31–51, 75–95, 151–171, and 222–242; these read FVIL…WWLF, LLWP…FSTI, IVLL…PVLW, and IPLL…AMWV.

The protein belongs to the CysZ family.

It localises to the cell inner membrane. Functionally, high affinity, high specificity proton-dependent sulfate transporter, which mediates sulfate uptake. Provides the sulfur source for the cysteine synthesis pathway. The polypeptide is Sulfate transporter CysZ (Escherichia coli O139:H28 (strain E24377A / ETEC)).